The sequence spans 506 residues: Tabersonine 16-hydroxylase 1 (506 aa).

Residues 1 to 21 (MEFYYFLYLAFLLFCFILSKT) form a helical membrane-spanning segment. Cysteine 447 lines the heme pocket.

This sequence belongs to the cytochrome P450 family. Requires heme as cofactor. Predominantly expressed in young leaves of mature plants. Low expression in roots and flowers, but not detected in stems and old leaves. Found predominantly in leaf epidermis. Barely detected in roots, internodes, young and mature leaves, and flower buds, but relatively abundant in fully developed flowers. Not detected in leaf epidermal cells.

The protein localises to the endoplasmic reticulum membrane. The enzyme catalyses (-)-tabersonine + reduced [NADPH--hemoprotein reductase] + O2 = 16-hydroxytabersonine + oxidized [NADPH--hemoprotein reductase] + H2O + H(+). The protein operates within alkaloid biosynthesis; vindoline biosynthesis. In terms of biological role, involved in the flower biosynthesis of vindoline, a precursor of vinblastine and vincristine. Hydroxylates specifically tabersonine, 2,3-dihydrotabersonine and 2,3-dihydro-3-hydroxytabersonine, but has no activity with naringenin, tryptamine, secologanin, strictosidine, ajmalicine, vindoline and catharanthine. This is Tabersonine 16-hydroxylase 1 from Catharanthus roseus (Madagascar periwinkle).